A 157-amino-acid chain; its full sequence is Ribosome-binding factor A (157 aa).

Residues 127-157 are disordered; that stretch reads QQQFGSEDASVEDEVLGDDVADDADETEGKD. Acidic residues predominate over residues 135–157; it reads ASVEDEVLGDDVADDADETEGKD.

It belongs to the RbfA family. Monomer. Binds 30S ribosomal subunits, but not 50S ribosomal subunits or 70S ribosomes.

It localises to the cytoplasm. Its function is as follows. One of several proteins that assist in the late maturation steps of the functional core of the 30S ribosomal subunit. Associates with free 30S ribosomal subunits (but not with 30S subunits that are part of 70S ribosomes or polysomes). Required for efficient processing of 16S rRNA. May interact with the 5'-terminal helix region of 16S rRNA. The sequence is that of Ribosome-binding factor A from Shewanella baltica (strain OS155 / ATCC BAA-1091).